A 124-amino-acid chain; its full sequence is Small ribosomal subunit protein uS13 (124 aa).

Residues 95–124 (GLPVRGQRTKTNARTRKGPKRTVAGKKKAR) are disordered.

It belongs to the universal ribosomal protein uS13 family. In terms of assembly, part of the 30S ribosomal subunit. Forms a loose heterodimer with protein S19. Forms two bridges to the 50S subunit in the 70S ribosome.

Its function is as follows. Located at the top of the head of the 30S subunit, it contacts several helices of the 16S rRNA. In the 70S ribosome it contacts the 23S rRNA (bridge B1a) and protein L5 of the 50S subunit (bridge B1b), connecting the 2 subunits; these bridges are implicated in subunit movement. Contacts the tRNAs in the A and P-sites. This Leifsonia xyli subsp. xyli (strain CTCB07) protein is Small ribosomal subunit protein uS13.